We begin with the raw amino-acid sequence, 241 residues long: DnaA regulatory inactivator Hda (241 aa).

It belongs to the DnaA family. HdA subfamily. In terms of assembly, the active form seems to be an ADP-bound monomer. Forms the RIDA complex (regulatory inactivation of DnaA) of ATP-DnaA, ADP-Hda and the DNA-loaded beta sliding clamp (dnaN).

Functionally, mediates the interaction of DNA replication initiator protein DnaA with DNA polymerase subunit beta sliding clamp (dnaN). Stimulates hydrolysis of ATP-DnaA to ADP-DnaA, rendering DnaA inactive for reinitiation, a process called regulatory inhibition of DnaA or RIDA. The sequence is that of DnaA regulatory inactivator Hda from Salmonella agona (strain SL483).